A 420-amino-acid chain; its full sequence is MPGGCSRGPAAGDGRLRLARLALVLLGWVSSSSPTSSASSFSSSAPFLASAVSAQPPLPDQCPALCECSEAARTVKCVNRNLTEVPTDLPAYVRNLFLTGNQLAVLPAGAFARRPPLAELAALNLSGSRLDEVRAGAFEHLPSLRQLDLSHNPLADLSPFAFSGSNASVSAPSPLVELILNHIVPPEDERQNRSFEGMVVAALLAGRALQGLRRLELASNHFLYLPRDVLAQLPSLRHLDLSNNSLVSLTYVSFRNLTHLESLHLEDNALKVLHNGTLAELQGLPHIRVFLDNNPWVCDCHMADMVTWLKETEVVQGKDRLTCAYPEKMRNRVLLELNSADLDCDPILPPSLQTSYVFLGIVLALIGAIFLLVLYLNRKGIKKWMHNIRDACRDHMEGYHYRYEINADPRLTNLSSNSDV.

Positions 1–31 (MPGGCSRGPAAGDGRLRLARLALVLLGWVSS) are cleaved as a signal peptide. Residues 32–355 (SSPTSSASSF…PILPPSLQTS (324 aa)) are Extracellular-facing. Residues 53–91 (SAQPPLPDQCPALCECSEAARTVKCVNRNLTEVPTDLPA) enclose the LRRNT domain. Cystine bridges form between cysteine 62–cysteine 68 and cysteine 66–cysteine 77. Asparagine 81 is a glycosylation site (N-linked (GlcNAc...) asparagine). LRR repeat units lie at residues 92 to 113 (YVRNLFLTGNQLAVLPAGAFAR), 116 to 139 (PLAELAALNLSGSRLDEVRAGAFE), 141 to 163 (LPSLRQLDLSHNPLADLSPFAFS), 172 to 204 (PSPLVELILNHIVPPEDERQNRSFEGMVVAALL), 209 to 232 (LQGLRRLELASNHFLYLPRDVLAQ), 233 to 255 (LPSLRHLDLSNNSLVSLTYVSFR), and 256 to 275 (NLTHLESLHLEDNALKVLHN). N-linked (GlcNAc...) asparagine glycosylation occurs at asparagine 124. N-linked (GlcNAc...) asparagine glycosylation occurs at asparagine 275. Residues 283–346 (GLPHIRVFLD…LNSADLDCDP (64 aa)) form the LRRCT domain. 2 disulfide bridges follow: cysteine 298-cysteine 323 and cysteine 300-cysteine 344. The helical transmembrane segment at 356–376 (YVFLGIVLALIGAIFLLVLYL) threads the bilayer. Topologically, residues 377–420 (NRKGIKKWMHNIRDACRDHMEGYHYRYEINADPRLTNLSSNSDV) are cytoplasmic. At serine 418 the chain carries Phosphoserine.

In terms of processing, highly glycosylated. As to expression, expressed by all types of trophoblasts as early as 9 weeks of development. Specific for trophoblastic cells except for amniotic epithelium. In adult tissues, the expression is limited to a few epithelial cell types but is found on a variety of carcinoma.

The protein localises to the cell membrane. Its function is as follows. May function as an inhibitor of Wnt/beta-catenin signaling by indirectly interacting with LRP6 and blocking Wnt3a-dependent LRP6 internalization. The protein is Trophoblast glycoprotein (TPBG) of Homo sapiens (Human).